A 257-amino-acid polypeptide reads, in one-letter code: Major prion protein (257 aa).

Residues 1-24 form the signal peptide; sequence MVKSHIGGWILLLFVATWSDVGLC. The interaction with GRB2, ERI3 and SYN1 stretch occupies residues 25–234; it reads KKRPKPGGWN…ESEAYYQRGA (210 aa). The interval 28–110 is disordered; it reads PKPGGWNTGG…GQWGKPNKPK (83 aa). 2 stretches are compositionally biased toward gly residues: residues 33 to 48 and 55 to 101; these read WNTGGGSRYPGQGSPG and QGGG…GSHG. 5 repeat units span residues 54–62, 63–70, 71–78, 79–86, and 87–95. A 5 X 8 AA tandem repeats of P-H-G-G-G-W-G-Q region spans residues 54–95; the sequence is PQGGGGWGQPHGGGWGQPHGGGWGQPHGGGWGQPHGGGGWGQ. Cu(2+)-binding residues include His-64, Gly-65, Gly-66, His-72, Gly-73, Gly-74, His-80, Gly-81, Gly-82, His-88, Gly-90, and Gly-91. An intrachain disulfide couples Cys-183 to Cys-218. N-linked (GlcNAc...) asparagine glycosylation is found at Asn-185 and Asn-201. Ala-234 carries GPI-anchor amidated alanine lipidation. Positions 235 to 257 are cleaved as a propeptide — removed in mature form; sequence SAILFSPPPVILLISLLILLIVG.

It belongs to the prion family. Monomer and homodimer. Has a tendency to aggregate into amyloid fibrils containing a cross-beta spine, formed by a steric zipper of superposed beta-strands. Soluble oligomers may represent an intermediate stage on the path to fibril formation. Copper binding may promote oligomerization. Interacts with GRB2, APP, ERI3/PRNPIP and SYN1. Mislocalized cytosolically exposed PrP interacts with MGRN1; this interaction alters MGRN1 subcellular location and causes lysosomal enlargement. Interacts with KIAA1191.

It localises to the cell membrane. Its subcellular location is the golgi apparatus. Functionally, its primary physiological function is unclear. Has cytoprotective activity against internal or environmental stresses. May play a role in neuronal development and synaptic plasticity. May be required for neuronal myelin sheath maintenance. May play a role in iron uptake and iron homeostasis. Soluble oligomers are toxic to cultured neuroblastoma cells and induce apoptosis (in vitro). Association with GPC1 (via its heparan sulfate chains) targets PRNP to lipid rafts. Also provides Cu(2+) or Zn(2+) for the ascorbate-mediated GPC1 deaminase degradation of its heparan sulfate side chains. The sequence is that of Major prion protein from Vulpes lagopus (Arctic fox).